Reading from the N-terminus, the 178-residue chain is Large ribosomal subunit protein uL6 (178 aa).

This sequence belongs to the universal ribosomal protein uL6 family. Part of the 50S ribosomal subunit.

In terms of biological role, this protein binds to the 23S rRNA, and is important in its secondary structure. It is located near the subunit interface in the base of the L7/L12 stalk, and near the tRNA binding site of the peptidyltransferase center. The protein is Large ribosomal subunit protein uL6 of Opitutus terrae (strain DSM 11246 / JCM 15787 / PB90-1).